The chain runs to 385 residues: Spindle pole component BBP1 (385 aa).

Ser29 is subject to Phosphoserine. Residues 34 to 48 are compositionally biased toward basic and acidic residues; it reads YKDQEERRDRSRYAQ. The interval 34–76 is disordered; the sequence is YKDQEERRDRSRYAQDDTNFSMKFGNDSNRRSTNLSRSNSWSG. The segment covering 64–75 has biased composition (low complexity); the sequence is RSTNLSRSNSWS. 2 positions are modified to phosphoserine: Ser73 and Ser115. Residues 229 to 355 are a coiled coil; it reads QMDLNSRDLE…KDMQRDNYES (127 aa).

The protein belongs to the BBP1 family. In terms of assembly, homodimer. Interacts with KAR1, MPS2 and SPC29.

Its subcellular location is the cytoplasm. It localises to the cytoskeleton. The protein resides in the microtubule organizing center. It is found in the spindle pole body. In terms of biological role, component of the spindle pole body (SPB) required for insertion of the nascent SPB into the nuclear envelope and for the proper execution of spindle pole body (SPB) duplication. Connects the central plaque of the SPB with the half-bridge. Required for proper localization of CDC5 at the SPB and for proper M-phase progression. This Saccharomyces cerevisiae (strain ATCC 204508 / S288c) (Baker's yeast) protein is Spindle pole component BBP1 (BBP1).